Consider the following 366-residue polypeptide: Ribosomal RNA large subunit methyltransferase M (366 aa).

Residues S188, 221–224 (CPGG), D240, D260, and D277 each bind S-adenosyl-L-methionine. K306 functions as the Proton acceptor in the catalytic mechanism.

Belongs to the class I-like SAM-binding methyltransferase superfamily. RNA methyltransferase RlmE family. RlmM subfamily. As to quaternary structure, monomer.

Its subcellular location is the cytoplasm. It catalyses the reaction cytidine(2498) in 23S rRNA + S-adenosyl-L-methionine = 2'-O-methylcytidine(2498) in 23S rRNA + S-adenosyl-L-homocysteine + H(+). Its function is as follows. Catalyzes the 2'-O-methylation at nucleotide C2498 in 23S rRNA. This is Ribosomal RNA large subunit methyltransferase M from Photorhabdus laumondii subsp. laumondii (strain DSM 15139 / CIP 105565 / TT01) (Photorhabdus luminescens subsp. laumondii).